The chain runs to 805 residues: U-box domain-containing protein 70 (805 aa).

TPR repeat units lie at residues 15-48, 49-82, 90-127, 129-153, 154-187, 189-221, and 222-255; these read ARRE…DPRD, ISFL…GREL, ARAL…HYSE, TLAK…DQEA, ADHH…NPKD, RVFS…DPTF, and LKGY…DPNN. The disordered stretch occupies residues 136 to 160; that stretch reads AEEARKEIEERERLDQEAADHHRDR. Residues 341–417 are a coiled coil; it reads RKETEESLSR…VREVEELRQK (77 aa). Residues 445–711 form the Protein kinase domain; the sequence is FSNSLKIGEG…GEVWAIVEAI (267 aa). ATP contacts are provided by residues 451–459 and K472; that span reads IGEGGFGCV. D567 (proton acceptor) is an active-site residue. The 75-residue stretch at 730–804 folds into the U-box domain; the sequence is SPPSYFICPI…QEWLQQHSMS (75 aa).

The protein belongs to the protein kinase superfamily. Ser/Thr protein kinase family. As to quaternary structure, interacts with MODD.

It catalyses the reaction L-seryl-[protein] + ATP = O-phospho-L-seryl-[protein] + ADP + H(+). It carries out the reaction L-threonyl-[protein] + ATP = O-phospho-L-threonyl-[protein] + ADP + H(+). The catalysed reaction is S-ubiquitinyl-[E2 ubiquitin-conjugating enzyme]-L-cysteine + [acceptor protein]-L-lysine = [E2 ubiquitin-conjugating enzyme]-L-cysteine + N(6)-ubiquitinyl-[acceptor protein]-L-lysine.. It participates in protein modification; protein ubiquitination. Its function is as follows. Functions as an E3 ubiquitin ligase. Is recruited by MODD to promote ubiquitination of BZIP46, a positive regulator of abscisic acid (ABA) signaling and drought stress tolerance. This Oryza sativa subsp. japonica (Rice) protein is U-box domain-containing protein 70.